A 282-amino-acid polypeptide reads, in one-letter code: Elongation factor Ts (282 aa).

Residues 80–83 form an involved in Mg(2+) ion dislocation from EF-Tu region; that stretch reads TDFV.

Belongs to the EF-Ts family.

It localises to the cytoplasm. Its function is as follows. Associates with the EF-Tu.GDP complex and induces the exchange of GDP to GTP. It remains bound to the aminoacyl-tRNA.EF-Tu.GTP complex up to the GTP hydrolysis stage on the ribosome. The sequence is that of Elongation factor Ts from Chlamydia trachomatis serovar A (strain ATCC VR-571B / DSM 19440 / HAR-13).